Reading from the N-terminus, the 592-residue chain is 3-hydroxy-3-methylglutaryl-coenzyme A reductase 1 (592 aa).

Residues 1 to 45 (MDLRRRPPKPPVTNNNNSNGSFRSYQPRTSDDDHRRRATTIAPPP) form a disordered region. The segment covering 12 to 28 (VTNNNNSNGSFRSYQPR) has biased composition (polar residues). N-linked (GlcNAc...) asparagine glycans are attached at residues asparagine 16 and asparagine 19. Transmembrane regions (helical) follow at residues 47–69 (ASDA…FFSV) and 97–117 (AIIA…IDFV). Positions 118–171 (QSFISRASGDAWDLADTIDDDDHRLVTCSPPTPIVSVAKLPNPEPIVTESLPEE) are linker. Positions 172–592 (DEEIVKSVID…GATTTTTTTT (421 aa)) are catalytic. The Charge relay system role is filled by glutamate 265. Asparagine 329 carries an N-linked (GlcNAc...) asparagine glycan. Residues lysine 397 and aspartate 473 each act as charge relay system in the active site. The active-site Proton donor is histidine 571. Asparagine 575 carries an N-linked (GlcNAc...) asparagine glycan. Serine 577 bears the Phosphoserine mark.

This sequence belongs to the HMG-CoA reductase family. Interacts (via N-terminus) with B''ALPHA and B''BETA. Post-translationally, inactivated by phosphorylation at Ser-577 by KIN10 activated form. Probably also phosphorylated at additional sites. As to expression, found in all tissues. Isoform Short is expressed at low levels specifically in flowers. Expressed in both the tapetum and microspores.

It localises to the endoplasmic reticulum membrane. The catalysed reaction is (R)-mevalonate + 2 NADP(+) + CoA = (3S)-3-hydroxy-3-methylglutaryl-CoA + 2 NADPH + 2 H(+). It functions in the pathway metabolic intermediate biosynthesis; (R)-mevalonate biosynthesis; (R)-mevalonate from acetyl-CoA: step 3/3. Its activity is regulated as follows. Regulated at the post-translational level in response to alterations of sphingolipid and sterol biosynthetic pathways. Negatively regulated by a PP2A-dependent dephosphorylation occurring at a site different than Ser-577. Completely inhibited by mevinolin (IC(50) = 12.5 nM). Reversibly inactivated by phosphorylation at Ser-577 by spinach or Brassica oleracea HMGR kinases in a cell-free system. Down-regulated by KIN10 through its phosphorylation at Ser-577. Its function is as follows. Catalyzes the synthesis of mevalonate, the specific precursor of all isoprenoid compounds present in plants. The polypeptide is 3-hydroxy-3-methylglutaryl-coenzyme A reductase 1 (Arabidopsis thaliana (Mouse-ear cress)).